We begin with the raw amino-acid sequence, 404 residues long: Cysteine desulfurase IscS (404 aa).

Pyridoxal 5'-phosphate contacts are provided by residues 75–76 (AT), N155, Q183, and 203–205 (SAH). Residue K206 is modified to N6-(pyridoxal phosphate)lysine. Residue T243 participates in pyridoxal 5'-phosphate binding. The Cysteine persulfide intermediate role is filled by C328. Residue C328 coordinates [2Fe-2S] cluster.

This sequence belongs to the class-V pyridoxal-phosphate-dependent aminotransferase family. NifS/IscS subfamily. In terms of assembly, homodimer. Forms a heterotetramer with IscU, interacts with other sulfur acceptors. Requires pyridoxal 5'-phosphate as cofactor.

It is found in the cytoplasm. The catalysed reaction is (sulfur carrier)-H + L-cysteine = (sulfur carrier)-SH + L-alanine. It functions in the pathway cofactor biosynthesis; iron-sulfur cluster biosynthesis. Its function is as follows. Master enzyme that delivers sulfur to a number of partners involved in Fe-S cluster assembly, tRNA modification or cofactor biosynthesis. Catalyzes the removal of elemental sulfur atoms from cysteine to produce alanine. Functions as a sulfur delivery protein for Fe-S cluster synthesis onto IscU, an Fe-S scaffold assembly protein, as well as other S acceptor proteins. The polypeptide is Cysteine desulfurase IscS (Neisseria meningitidis serogroup C (strain 053442)).